The primary structure comprises 572 residues: MSAILSADDLNDFISPGVACIKPVETLPAAKPSADNELEISFNTDAPLPSDLPPAQISLTDCLACSGCVTSAEAVLVSLQSHAEVLSQLDSAPGIRLHKSATGTGVSVEGLEQGGKIYVASVSPQSRASIAATFGVTEREAGYMIEHLLSGPKGIKNRAVYRNAFQWVVDTNITREACLVLGAEEVIASMNGTEETKKPILTSSCPGWVCYAEKTHPHVLPHLSRMKSPQALMGTLIKTTLSRKLGISPERIWHVAVMPCFDKKLEASREELTDAVWEGTGTRGVRDVDSVITSKELLMLADSRRIDFSKLPRTPLPSSSHIPFPDPTLNSFLFPSNRRSSSNGSRDAGSSGGNLHYALHYFASQHKGSSVQTIKGRNADVVDYTVVADNGDILLKAARYYGFRNIQNLVRRLKPARPSRMPGGKPIGSARRPNGKATGPDYTYVEVMACPGGCTNGGGQIKVDDPINTSRLEGDSKPGPQEQKMWLAQVDEAYFSGDDSTVCSSVDDRNDLVEGISPSYIKDTLSHWATTTGLDLERLVYTTYREVVSDVGKNAGDAERVIEIANKIGGGW.

[4Fe-4S] cluster contacts are provided by cysteine 20, cysteine 62, cysteine 65, cysteine 68, cysteine 205, and cysteine 260. Residues 416–436 (ARPSRMPGGKPIGSARRPNGK) are disordered. [4Fe-4S] cluster is bound by residues cysteine 450 and cysteine 454.

Belongs to the NARF family.

Component of the cytosolic Fe/S protein assembly machinery. Required for maturation of extramitochondrial Fe/S proteins. May play a role in the transfer of pre-assembled Fe/S clusters to target apoproteins. This Botryotinia fuckeliana (strain B05.10) (Noble rot fungus) protein is Cytosolic Fe-S cluster assembly factor NAR1 (NAR1).